We begin with the raw amino-acid sequence, 498 residues long: ATP synthase subunit beta, chloroplastic (498 aa).

172-179 contacts ATP; sequence GGAGVGKT.

Belongs to the ATPase alpha/beta chains family. F-type ATPases have 2 components, CF(1) - the catalytic core - and CF(0) - the membrane proton channel. CF(1) has five subunits: alpha(3), beta(3), gamma(1), delta(1), epsilon(1). CF(0) has four main subunits: a(1), b(1), b'(1) and c(9-12).

It localises to the plastid. Its subcellular location is the chloroplast thylakoid membrane. The catalysed reaction is ATP + H2O + 4 H(+)(in) = ADP + phosphate + 5 H(+)(out). In terms of biological role, produces ATP from ADP in the presence of a proton gradient across the membrane. The catalytic sites are hosted primarily by the beta subunits. The polypeptide is ATP synthase subunit beta, chloroplastic (Saruma henryi (Upright wild ginger)).